The chain runs to 56 residues: MFGWAVTFLIIALIAALFGFTGLAGVATHIAWILFVVGLILFVVFLLLGRRGRPPL.

Helical transmembrane passes span 1–21 (MFGWAVTFLIIALIAALFGFT) and 29–49 (HIAWILFVVGLILFVVFLLLG).

It belongs to the UPF0391 family.

The protein resides in the cell membrane. The polypeptide is UPF0391 membrane protein Noc_0482 (Nitrosococcus oceani (strain ATCC 19707 / BCRC 17464 / JCM 30415 / NCIMB 11848 / C-107)).